A 335-amino-acid polypeptide reads, in one-letter code: Glucokinase (335 aa).

Position 11 to 16 (11 to 16) interacts with ATP; the sequence is ADIGGT.

Belongs to the bacterial glucokinase family.

Its subcellular location is the cytoplasm. The catalysed reaction is D-glucose + ATP = D-glucose 6-phosphate + ADP + H(+). The protein is Glucokinase of Xanthomonas oryzae pv. oryzae (strain MAFF 311018).